The chain runs to 341 residues: Acetylpolyamine amidohydrolase (341 aa).

The substrate site is built by tyrosine 19, glutamate 106, and glutamate 117. Histidine 159 functions as the Proton donor/acceptor in the catalytic mechanism. The Zn(2+) site is built by aspartate 195, histidine 197, and aspartate 284. Substrate is bound at residue tyrosine 323.

This sequence belongs to the histone deacetylase family. Homodimer. Zn(2+) is required as a cofactor.

The enzyme catalyses N-acetylputrescine + H2O = putrescine + acetate. It catalyses the reaction N-acetylcadaverine + H2O = cadaverine + acetate. It carries out the reaction N(1)-acetylspermine + H2O = spermine + acetate. The catalysed reaction is N(1)-acetylspermidine + H2O = spermidine + acetate. The enzyme catalyses N(8)-acetylspermidine + H2O = spermidine + acetate. The protein operates within amine and polyamine metabolism. Zinc ions inhibit enzyme activity in a dose-dependent manner. Inhibited by KCl at concentrations above 10 mM. Inhibited by o-oxyquinoline in vitro, suggesting that it is a metalloprotein. Inhibited by various substrate N(8)-acetylspermidine analogs bearing different metal-binding groups such as trifluoromethylketone, thiol, or hydroxamate, and by hydroxamate analogs of short-chain acetyldiamines. Functionally, involved in polyamine metabolism. Catalyzes the deacetylation of various acetylated polyamines such as N-acetylputrescine, N-acetylcadaverine, N(1)-acetylspermine, N(1)-acetylspermidine and N(8)-acetylspermidine. In vitro, is also able to deacetylate L-Lys(epsilon-acetyl)coumarin, but has very low activity towards the larger tetrapeptide N-acetyl-L-Arg-L-His-L-Lys(epsilon-acetyl)-L-Lys(epsilon-acetyl)coumarin. This Mycoplana ramosa (Mycoplana bullata) protein is Acetylpolyamine amidohydrolase.